The primary structure comprises 615 residues: 1-deoxy-D-xylulose-5-phosphate synthase (615 aa).

Residues His76 and 117-119 (GHS) each bind thiamine diphosphate. Asp148 is a binding site for Mg(2+). Thiamine diphosphate is bound by residues 149–150 (GA), Asn177, Tyr284, and Glu365. Mg(2+) is bound at residue Asn177.

The protein belongs to the transketolase family. DXPS subfamily. As to quaternary structure, homodimer. Requires Mg(2+) as cofactor. Thiamine diphosphate is required as a cofactor.

The catalysed reaction is D-glyceraldehyde 3-phosphate + pyruvate + H(+) = 1-deoxy-D-xylulose 5-phosphate + CO2. The protein operates within metabolic intermediate biosynthesis; 1-deoxy-D-xylulose 5-phosphate biosynthesis; 1-deoxy-D-xylulose 5-phosphate from D-glyceraldehyde 3-phosphate and pyruvate: step 1/1. Catalyzes the acyloin condensation reaction between C atoms 2 and 3 of pyruvate and glyceraldehyde 3-phosphate to yield 1-deoxy-D-xylulose-5-phosphate (DXP). The chain is 1-deoxy-D-xylulose-5-phosphate synthase from Francisella tularensis subsp. tularensis (strain FSC 198).